We begin with the raw amino-acid sequence, 361 residues long: uncharacterized protein (361 aa).

Residue 41–48 (GPLNSGKT) participates in ATP binding.

This sequence belongs to the archaeal ATPase family.

This is an uncharacterized protein from Methanocaldococcus jannaschii (strain ATCC 43067 / DSM 2661 / JAL-1 / JCM 10045 / NBRC 100440) (Methanococcus jannaschii).